Reading from the N-terminus, the 456-residue chain is Putative sodium-coupled neutral amino acid transporter 11 (456 aa).

Residues 1–25 (MRAGPRRQHLLPPQDNRAAVGYQRQ) form a disordered region. Residues 58–78 (FNVVNSIIGSGIIDFSLILLI) form a helical membrane-spanning segment. N-linked (GlcNAc...) asparagine glycosylation is present at Asn94. 6 helical membrane passes run 98–118 (GFPG…IAMI), 143–163 (VFIG…LPLS), 171–191 (LGKV…IVMA), 206–226 (AWVF…FAFI), 252–272 (MSIV…YLTF), and 291–313 (VTFG…CFVT). Asn325 carries an N-linked (GlcNAc...) asparagine glycan. Helical transmembrane passes span 329 to 349 (VFHI…SLLI), 351 to 371 (CLGI…IFII), and 390 to 410 (IMSY…FVMA).

Belongs to the amino acid/polyamine transporter 2 family.

Its subcellular location is the membrane. Putative sodium-dependent amino acid/proton antiporter. This chain is Putative sodium-coupled neutral amino acid transporter 11 (SLC38A11), found in Macaca fascicularis (Crab-eating macaque).